Here is a 208-residue protein sequence, read N- to C-terminus: uncharacterized protein (208 aa).

Positions 1-16 (MTRVALLTTGRELSQA) are cleaved as a signal peptide. Disordered stretches follow at residues 1–95 (MTRV…VRGQ) and 145–176 (RVTKVSSSGPNSTPLPAARIGPGTNNAPSAAD). Residues 16–25 (AAPPARARTP) are compositionally biased toward low complexity. Residues 32 to 43 (RGERPDDGGHAP) show a composition bias toward basic and acidic residues. The span at 44–54 (HRDRRVNQRRR) shows a compositional bias: basic residues. Basic and acidic residues predominate over residues 55-95 (QVGDRRAQRGVDEHPWRRPDERPNDHLPQRNSERPEGVRGQ). Composition is skewed to polar residues over residues 148–158 (KVSSSGPNSTP) and 167–176 (GTNNAPSAAD).

This is an uncharacterized protein from Mycobacterium tuberculosis (strain CDC 1551 / Oshkosh).